Here is a 470-residue protein sequence, read N- to C-terminus: Pre-mycofactocin glycosyltransferase (470 aa).

A helical transmembrane segment spans residues 315–335 (LVISGGALMAWILMSIGTGLG).

It belongs to the glycosyltransferase 2 family.

It is found in the cell membrane. In terms of biological role, involved in the biosynthesis of the enzyme cofactor mycofactocin (MFT). Acts as a glycosyltransferase that catalyzes the oligoglycosylation of pre-mycofactocin (PMFT), adding up to nine beta-1,4-linked glucose residues. Is required for the in vivo ethanol assimilation in M.smegmatis. In Mycobacterium tuberculosis (strain CDC 1551 / Oshkosh), this protein is Pre-mycofactocin glycosyltransferase (mftF).